Reading from the N-terminus, the 367-residue chain is MDYTNAIHIIPDAAGPDAWANAAAQGGDAGIWATEDDYNSQWNADGGGGGSSRAGSEQPPPGKKSRGGGGGEGGGNTSKSRAIGKMFFKTKLCCKFRAGTCPYVTNCNFAHGMEELRKPPPNWQEIVAAHEEATEAREEHQIPIMTSSGPTAGGDAGCGGGGGGGSGRAYKGRHCKKFYTDEGCPYGDACTFLHDEQSKARESVAISLSPSVGGGGGGGSYNSAAAAAASASAAAGNGPMQKPSNWKTRICNKWEMTGYCPFGSKCHFAHGAAELHKYGGGLVDIDSRDAAATPDSKQAVVSAKAPAETAAASTTVLPHADVYHLGVQAQRSTIAGQRSGQVQRPIQKWKGPDKISRIYGDWIDETE.

A disordered region spans residues 38-80 (YNSQWNADGGGGGSSRAGSEQPPPGKKSRGGGGGEGGGNTSKS). Over residues 67–76 (GGGGGEGGGN) the composition is skewed to gly residues. C3H1-type zinc fingers lie at residues 87 to 114 (FFKT…HGME), 169 to 197 (AYKG…HDEQ), and 245 to 273 (NWKT…HGAA).

The protein is Zinc finger CCCH domain-containing protein 56 of Oryza sativa subsp. japonica (Rice).